The following is a 131-amino-acid chain: MSITYTTVGELKVGSYVVIDGEPCRVVEVTKAKTGKHGSAKANVVAIGVFSGAKKTLMAPVDQQVEVPIIEKHIGQIIADMGDKIQVMDLETYETFEIEKPTEDELASKIRPNAELEYWEIMGRRKIVRVK.

K36 carries the hypusine modification.

It belongs to the eIF-5A family.

The protein localises to the cytoplasm. In terms of biological role, functions by promoting the formation of the first peptide bond. The sequence is that of Translation initiation factor 5A (eIF5A) from Saccharolobus islandicus (strain Y.N.15.51 / Yellowstone #2) (Sulfolobus islandicus).